A 344-amino-acid chain; its full sequence is MGGLMKKNTLILGIESSCDETAASVVKNGNEIISSVVASQIESHKRFGGVVPEIASRHHVEQITLVIEEALKQANVTMDDLDGVAVTEGPGLVGALLIGVNAAKTLAFMHNLPLVGVHHIAGHIYANRFETEFKFPLLSLVVSGGHTELVLMKADNEFEIIGETRDDAAGEAYDKVARTLGLAYPGGVQIDKLAKDGEDTFHFPRAMMDEGSFDFSFSGLKSSFINTLHNLRQRGEEPNPNDMAASFQASVVDVLVSKTIRAAKQYDVKQLLLAGGVAANQGLRERLIQEVKLELPETELIIPPLALCGDNAAMIAAAGTVSFLQGKRSGFDMNANPGLLLEDI.

Fe cation is bound by residues His-119 and His-123. Substrate contacts are provided by residues 141-145, Asp-174, Gly-187, Asp-191, and Asn-280; that span reads VVSGG. Asp-310 provides a ligand contact to Fe cation.

This sequence belongs to the KAE1 / TsaD family. Requires Fe(2+) as cofactor.

It localises to the cytoplasm. It carries out the reaction L-threonylcarbamoyladenylate + adenosine(37) in tRNA = N(6)-L-threonylcarbamoyladenosine(37) in tRNA + AMP + H(+). Functionally, required for the formation of a threonylcarbamoyl group on adenosine at position 37 (t(6)A37) in tRNAs that read codons beginning with adenine. Is involved in the transfer of the threonylcarbamoyl moiety of threonylcarbamoyl-AMP (TC-AMP) to the N6 group of A37, together with TsaE and TsaB. TsaD likely plays a direct catalytic role in this reaction. In Listeria monocytogenes serovar 1/2a (strain ATCC BAA-679 / EGD-e), this protein is tRNA N6-adenosine threonylcarbamoyltransferase.